The following is a 1031-amino-acid chain: Beta-galactosidase (1031 aa).

Asn-98 and Asp-197 together coordinate substrate. Asp-197 serves as a coordination point for Na(+). Glu-412, His-414, and Glu-457 together coordinate Mg(2+). Residues Glu-457 and 533–536 (EYAH) each bind substrate. Glu-457 acts as the Proton donor in catalysis. Glu-533 serves as the catalytic Nucleophile. Asn-593 contributes to the Mg(2+) binding site. Na(+) is bound by residues Phe-597 and Asp-600. 2 residues coordinate substrate: Asp-600 and Trp-1005.

This sequence belongs to the glycosyl hydrolase 2 family. In terms of assembly, homotetramer. Mg(2+) serves as cofactor. Requires Na(+) as cofactor.

The enzyme catalyses Hydrolysis of terminal non-reducing beta-D-galactose residues in beta-D-galactosides.. In Oenococcus oeni (strain ATCC BAA-331 / PSU-1), this protein is Beta-galactosidase.